We begin with the raw amino-acid sequence, 251 residues long: Chloride intracellular channel protein 5 (251 aa).

The tract at residues 1–98 (MTDSATANGD…EEFLEETLTP (98 aa)) is required for insertion into the membrane. A G-site motif is present at residues 32 to 35 (CPFS). Residues 34 to 54 (FSQRLFMILWLKGVVFNVTTV) traverse the membrane as a helical segment. A GST C-terminal domain is found at 101–241 (YPKLAARHRE…AADSEIELAY (141 aa)).

It belongs to the chloride channel CLIC family. As to quaternary structure, component of a multimeric complex consisting of several cytoskeletal proteins, including actin, ezrin, alpha-actinin, gelsolin, and IQGAP1. Interacts with AKAP9. Interacts with TPRN. TPRN, CLIC5 and PTPQR form concentric rings at the base of stereocilia and may form a complex. Interacts with EZR, MYO6 and RDX; the proteins may work together as a complex to stabilize linkages between the plasma membrane and subjacent actin cytoskeleton at the stereocilium base. Detected in cochlea, in cochlear and vestibular hair cell bundles in the organ of Corti (at protein level). Expressed neonatal and adult cardiomyocytes (at protein level).

It localises to the golgi apparatus. The protein localises to the cytoplasm. Its subcellular location is the cytoskeleton. The protein resides in the microtubule organizing center. It is found in the centrosome. It localises to the cell cortex. The protein localises to the membrane. Its subcellular location is the apical cell membrane. The protein resides in the mitochondrion. It is found in the cell projection. It localises to the stereocilium. It carries out the reaction Na(+)(in) = Na(+)(out). The enzyme catalyses K(+)(in) = K(+)(out). The catalysed reaction is chloride(in) = chloride(out). With respect to regulation, inhibited by F-actin. Its function is as follows. In the soluble state, catalyzes glutaredoxin-like thiol disulfide exchange reactions with reduced glutathione as electron donor. Can insert into membranes and form non-selective ion channels almost equally permeable to Na(+), K(+) and Cl(-). Required for normal hearing. It is necessary for the formation of stereocilia in the inner ear and normal development of the organ of Corti. May play a role in the regulation of transepithelial ion absorption and secretion. Is required for the development and/or maintenance of the proper glomerular endothelial cell and podocyte architecture. Plays a role in formation of the lens suture in the eye, which is important for normal optical properties of the lens. The protein is Chloride intracellular channel protein 5 (Clic5) of Rattus norvegicus (Rat).